We begin with the raw amino-acid sequence, 240 residues long: Acyl-protein thioesterase 1 (240 aa).

Catalysis depends on charge relay system residues Ser129, Asp183, and His219.

The protein belongs to the AB hydrolase superfamily. AB hydrolase 2 family.

It localises to the cytoplasm. The protein resides in the nucleus. The catalysed reaction is S-hexadecanoyl-L-cysteinyl-[protein] + H2O = L-cysteinyl-[protein] + hexadecanoate + H(+). In terms of biological role, hydrolyzes fatty acids from S-acylated cysteine residues in proteins with a strong preference for palmitoylated G-alpha proteins over other acyl substrates. Mediates the deacylation of G-alpha proteins such as GPA1 in vivo, but has weak or no activity toward palmitoylated Ras proteins. Has weak lysophospholipase activity in vitro; however such activity may not exist in vivo. The sequence is that of Acyl-protein thioesterase 1 from Mycosarcoma maydis (Corn smut fungus).